Here is a 305-residue protein sequence, read N- to C-terminus: Ubiquinone biosynthesis protein COQ4 homolog, mitochondrial (305 aa).

Zn(2+) contacts are provided by His150, Asp151, His154, and Glu166.

It belongs to the COQ4 family. As to quaternary structure, component of a multi-subunit COQ enzyme complex. Requires Zn(2+) as cofactor.

Its subcellular location is the mitochondrion inner membrane. It catalyses the reaction a 4-hydroxy-3-methoxy-5-(all-trans-polyprenyl)benzoate + H(+) = a 2-methoxy-6-(all-trans-polyprenyl)phenol + CO2. It functions in the pathway cofactor biosynthesis; ubiquinone biosynthesis. In terms of biological role, lyase that catalyzes the C1-decarboxylation of 4-hydroxy-3-methoxy-5-(all-trans-polyprenyl)benzoic acid into 2-methoxy-6-(all-trans-polyprenyl)phenol during ubiquinone biosynthesis. The protein is Ubiquinone biosynthesis protein COQ4 homolog, mitochondrial of Cryptosporidium parvum (strain Iowa II).